The sequence spans 900 residues: Isoleucine--tRNA ligase (900 aa).

A 'HIGH' region motif is present at residues 58-68 (PYANGNIHIGH). Glutamate 552 is an L-isoleucyl-5'-AMP binding site. The 'KMSKS' region signature appears at 593 to 597 (KMSKS). Residue lysine 596 coordinates ATP.

This sequence belongs to the class-I aminoacyl-tRNA synthetase family. IleS type 1 subfamily. As to quaternary structure, monomer.

The protein resides in the cytoplasm. It catalyses the reaction tRNA(Ile) + L-isoleucine + ATP = L-isoleucyl-tRNA(Ile) + AMP + diphosphate. Functionally, catalyzes the attachment of isoleucine to tRNA(Ile). As IleRS can inadvertently accommodate and process structurally similar amino acids such as valine, to avoid such errors it has two additional distinct tRNA(Ile)-dependent editing activities. One activity is designated as 'pretransfer' editing and involves the hydrolysis of activated Val-AMP. The other activity is designated 'posttransfer' editing and involves deacylation of mischarged Val-tRNA(Ile). The polypeptide is Isoleucine--tRNA ligase (Ureaplasma parvum serovar 3 (strain ATCC 700970)).